The chain runs to 204 residues: ATP-dependent Clp protease proteolytic subunit (204 aa).

Ser-100 serves as the catalytic Nucleophile. The active site involves His-125.

Belongs to the peptidase S14 family. In terms of assembly, fourteen ClpP subunits assemble into 2 heptameric rings which stack back to back to give a disk-like structure with a central cavity, resembling the structure of eukaryotic proteasomes.

The protein localises to the cytoplasm. It catalyses the reaction Hydrolysis of proteins to small peptides in the presence of ATP and magnesium. alpha-casein is the usual test substrate. In the absence of ATP, only oligopeptides shorter than five residues are hydrolyzed (such as succinyl-Leu-Tyr-|-NHMec, and Leu-Tyr-Leu-|-Tyr-Trp, in which cleavage of the -Tyr-|-Leu- and -Tyr-|-Trp bonds also occurs).. Functionally, cleaves peptides in various proteins in a process that requires ATP hydrolysis. Has a chymotrypsin-like activity. Plays a major role in the degradation of misfolded proteins. In Anaeromyxobacter sp. (strain Fw109-5), this protein is ATP-dependent Clp protease proteolytic subunit.